The primary structure comprises 340 residues: Extracellular matrix protein-binding protein emp (340 aa).

The N-terminal stretch at 1 to 26 is a signal peptide; that stretch reads MKKKLLVLTMSTLFATQLINSNHAKA.

Its subcellular location is the cell surface. Functionally, adhesin that binds to the host cell extracellular matrix proteins fibronectin, fibrinogen, collagen, and vitronectin. This Staphylococcus aureus (strain Mu50 / ATCC 700699) protein is Extracellular matrix protein-binding protein emp (emp).